Here is a 143-residue protein sequence, read N- to C-terminus: 3-hydroxyacyl-[acyl-carrier-protein] dehydratase FabZ (143 aa).

Residue His-49 is part of the active site.

Belongs to the thioester dehydratase family. FabZ subfamily.

It localises to the cytoplasm. The catalysed reaction is a (3R)-hydroxyacyl-[ACP] = a (2E)-enoyl-[ACP] + H2O. Its function is as follows. Involved in unsaturated fatty acids biosynthesis. Catalyzes the dehydration of short chain beta-hydroxyacyl-ACPs and long chain saturated and unsaturated beta-hydroxyacyl-ACPs. The sequence is that of 3-hydroxyacyl-[acyl-carrier-protein] dehydratase FabZ from Wolbachia pipientis subsp. Culex pipiens (strain wPip).